A 900-amino-acid chain; its full sequence is Alanine--tRNA ligase (900 aa).

His587, His591, Cys691, and His695 together coordinate Zn(2+).

It belongs to the class-II aminoacyl-tRNA synthetase family. It depends on Zn(2+) as a cofactor.

The protein resides in the cytoplasm. The catalysed reaction is tRNA(Ala) + L-alanine + ATP = L-alanyl-tRNA(Ala) + AMP + diphosphate. In terms of biological role, catalyzes the attachment of alanine to tRNA(Ala) in a two-step reaction: alanine is first activated by ATP to form Ala-AMP and then transferred to the acceptor end of tRNA(Ala). Also edits incorrectly charged Ser-tRNA(Ala) and Gly-tRNA(Ala) via its editing domain. This Aeropyrum pernix (strain ATCC 700893 / DSM 11879 / JCM 9820 / NBRC 100138 / K1) protein is Alanine--tRNA ligase.